The chain runs to 611 residues: Probable potassium transport system protein Kup 1 (611 aa).

The next 12 membrane-spanning stretches (helical) occupy residues 6–26, 44–64, 90–110, 129–149, 158–178, 193–213, 237–257, 280–300, 328–348, 354–374, 385–405, and 410–430; these read LMVG…LYTM, MLSL…VAVV, LGVI…GAIT, ISPY…ALQA, LFGP…LFGI, GLSY…AVFL, WYGL…AVVV, LVAL…SGAF, IYIG…TLGF, LAAA…ILMF, LAAS…FVSA, and VLEG…LMMT.

This sequence belongs to the HAK/KUP transporter (TC 2.A.72) family.

The protein localises to the cell inner membrane. It catalyses the reaction K(+)(in) + H(+)(in) = K(+)(out) + H(+)(out). Transport of potassium into the cell. Likely operates as a K(+):H(+) symporter. This chain is Probable potassium transport system protein Kup 1, found in Bradyrhizobium sp. (strain BTAi1 / ATCC BAA-1182).